The primary structure comprises 209 residues: ATP-dependent Clp protease proteolytic subunit 2 (209 aa).

Serine 107 functions as the Nucleophile in the catalytic mechanism. Histidine 132 is a catalytic residue.

This sequence belongs to the peptidase S14 family. As to quaternary structure, fourteen ClpP subunits assemble into 2 heptameric rings which stack back to back to give a disk-like structure with a central cavity, resembling the structure of eukaryotic proteasomes.

The protein resides in the cytoplasm. It carries out the reaction Hydrolysis of proteins to small peptides in the presence of ATP and magnesium. alpha-casein is the usual test substrate. In the absence of ATP, only oligopeptides shorter than five residues are hydrolyzed (such as succinyl-Leu-Tyr-|-NHMec, and Leu-Tyr-Leu-|-Tyr-Trp, in which cleavage of the -Tyr-|-Leu- and -Tyr-|-Trp bonds also occurs).. Cleaves peptides in various proteins in a process that requires ATP hydrolysis. Has a chymotrypsin-like activity. Plays a major role in the degradation of misfolded proteins. In Corynebacterium jeikeium (strain K411), this protein is ATP-dependent Clp protease proteolytic subunit 2.